The primary structure comprises 196 residues: DnaA initiator-associating protein DiaA (196 aa).

The region spanning 34–196 (MVQSLLNGNK…DNTLFPHQND (163 aa)) is the SIS domain.

The protein belongs to the SIS family. DiaA subfamily. As to quaternary structure, homotetramer; dimer of dimers.

Required for the timely initiation of chromosomal replication via direct interactions with the DnaA initiator protein. The polypeptide is DnaA initiator-associating protein DiaA (Pectobacterium atrosepticum (strain SCRI 1043 / ATCC BAA-672) (Erwinia carotovora subsp. atroseptica)).